We begin with the raw amino-acid sequence, 144 residues long: Large ribosomal subunit protein uL11 (144 aa).

Belongs to the universal ribosomal protein uL11 family. In terms of assembly, part of the ribosomal stalk of the 50S ribosomal subunit. Interacts with L10 and the large rRNA to form the base of the stalk. L10 forms an elongated spine to which L12 dimers bind in a sequential fashion forming a multimeric L10(L12)X complex. In terms of processing, one or more lysine residues are methylated.

Functionally, forms part of the ribosomal stalk which helps the ribosome interact with GTP-bound translation factors. This chain is Large ribosomal subunit protein uL11, found in Deinococcus geothermalis (strain DSM 11300 / CIP 105573 / AG-3a).